We begin with the raw amino-acid sequence, 583 residues long: Sensor protein SrrB (583 aa).

Over 1–11 (MMSRLNSVVIK) the chain is Cytoplasmic. Residues 12–32 (LWLTIILIVTTVLILLSIALI) form a helical membrane-spanning segment. Over 33 to 174 (TFMQYYFTQE…SIEDTNNAIT (142 aa)) the chain is Extracellular. Residues 175-195 (IITIITAVIFLTITTVFAFFL) traverse the membrane as a helical segment. Over 196–583 (SSRITKPLRR…TFIIKLPKPE (388 aa)) the chain is Cytoplasmic. An HAMP domain is found at 197–249 (SRITKPLRRLRDQATRVSEGDYSYKPSVTTKDEIGQLSQAFNQMSTEIEEHVD). The region spanning 366–583 (NVSHELRTPI…TFIIKLPKPE (218 aa)) is the Histidine kinase domain. Residue histidine 369 is modified to Phosphohistidine; by autocatalysis.

The protein localises to the cell membrane. The catalysed reaction is ATP + protein L-histidine = ADP + protein N-phospho-L-histidine.. Its function is as follows. Member of the two-component regulatory system SrrA/SrrB, which is involved in the global regulation of staphylococcal virulence factors in response to environmental oxygen levels as well as biofilm formation. Also plays an essential role in host-derived nitric oxide resistance by regulating hmp/flavohemoglobin, an enzyme that detoxifies nitric oxide by converting it to nitrate. Functions as a sensor protein kinase which is autophosphorylated at a histidine residue and transfers its phosphate group to SrrA. In turn, SrrA binds to the upstream promoter regions of the target genes to positively and negatively regulate their expression. The sequence is that of Sensor protein SrrB (srrB) from Staphylococcus aureus (strain Mu50 / ATCC 700699).